A 344-amino-acid chain; its full sequence is Plastoglobule-localized metallopeptidase 48, chloroplastic (344 aa).

A chloroplast-targeting transit peptide spans 1–47 (MAVSVSAPVLSLCYNQSGELSRSLGYRLPKKVGFSSGRRSVSYIGFG). The next 2 helical transmembrane spans lie at 102–122 (LLGS…SVLV) and 169–189 (FIVV…QAVL). Residue H191 coordinates Zn(2+). The active site involves E192. Position 195 (H195) interacts with Zn(2+). A helical membrane pass occupies residues 201–221 (GVWLTFANILTLGAYTVPAFG). Zn(2+) is bound at residue E240. The chain crosses the membrane as a helical span at residues 256 to 272 (VVVSVLMKLAGGCPSIA).

It belongs to the peptidase M48 family. M48D subfamily. In terms of assembly, interacts with plastoglobule (PG) core proteins ABC1K3, PES1 and CCD4. It depends on Zn(2+) as a cofactor. As to expression, mostly expressed in flowers (e.g. sepals, petals and stamen), seeds, leaves and cotyledons.

The protein resides in the plastid. Its subcellular location is the chloroplast. The protein localises to the plastoglobule. It localises to the chloroplast membrane. In terms of biological role, metalloendopeptidase with a Zn-dependent proteolytic activity and substrate cleavage upstream of hydrophobic residues. Positive regulator of senescence, probably by degrading CCD4, thus participating in the controlled removal of carotenoids from the thylakoid membrane during the senescence process. The sequence is that of Plastoglobule-localized metallopeptidase 48, chloroplastic from Arabidopsis thaliana (Mouse-ear cress).